A 200-amino-acid chain; its full sequence is Recombination protein RecR (200 aa).

The C4-type zinc finger occupies 58-73; that stretch reads CSVCGNLTDTDPCFIC. A Toprim domain is found at 81 to 176; the sequence is DLLCVVERPR…SVTRIAHGLP (96 aa).

The protein belongs to the RecR family.

In terms of biological role, may play a role in DNA repair. It seems to be involved in an RecBC-independent recombinational process of DNA repair. It may act with RecF and RecO. In Pelotomaculum thermopropionicum (strain DSM 13744 / JCM 10971 / SI), this protein is Recombination protein RecR.